A 94-amino-acid chain; its full sequence is Large ribosomal subunit protein uL23 (94 aa).

Belongs to the universal ribosomal protein uL23 family. In terms of assembly, part of the 50S ribosomal subunit. Contacts protein L29, and trigger factor when it is bound to the ribosome.

Functionally, one of the early assembly proteins it binds 23S rRNA. One of the proteins that surrounds the polypeptide exit tunnel on the outside of the ribosome. Forms the main docking site for trigger factor binding to the ribosome. The sequence is that of Large ribosomal subunit protein uL23 from Dehalococcoides mccartyi (strain ATCC BAA-2266 / KCTC 15142 / 195) (Dehalococcoides ethenogenes (strain 195)).